A 483-amino-acid polypeptide reads, in one-letter code: Cobyric acid synthase (483 aa).

The GATase cobBQ-type domain occupies 251–438 (ALIVAVPMLP…LHGVFSADRF (188 aa)). The active-site Nucleophile is Cys-333. His-430 is a catalytic residue.

This sequence belongs to the CobB/CobQ family. CobQ subfamily.

Its pathway is cofactor biosynthesis; adenosylcobalamin biosynthesis. In terms of biological role, catalyzes amidations at positions B, D, E, and G on adenosylcobyrinic A,C-diamide. NH(2) groups are provided by glutamine, and one molecule of ATP is hydrogenolyzed for each amidation. The chain is Cobyric acid synthase from Brucella canis (strain ATCC 23365 / NCTC 10854 / RM-666).